A 440-amino-acid chain; its full sequence is Coenzyme A disulfide reductase (440 aa).

8-33 (GAVAGGATCASQIRRLDKDSEITIFE) contributes to the FAD binding site. Substrate contacts are provided by T15, Q19, R22, S39, and N42. The active-site Nucleophile is C43. Residue C43 is the Redox-active of the active site. K71 is a substrate binding site. 151–166 (ALVVGAGYISLEVLEN) contacts NADP(+). 267–277 (TNIPNIYALGD) lines the FAD pocket. H299 serves as a coordination point for substrate. FAD is bound at residue Y419. Residue K427 participates in substrate binding.

This sequence belongs to the class-III pyridine nucleotide-disulfide oxidoreductase family. As to quaternary structure, homodimer. Requires FAD as cofactor.

The enzyme catalyses NADP(+) + 2 CoA = CoA-disulfide + NADPH + H(+). Its function is as follows. Catalyzes specifically the NADPH-dependent reduction of coenzyme A disulfide. The polypeptide is Coenzyme A disulfide reductase (Staphylococcus haemolyticus (strain JCSC1435)).